The chain runs to 309 residues: Homoserine O-acetyltransferase (309 aa).

The active-site Acyl-thioester intermediate is cysteine 142. Lysine 163 and serine 192 together coordinate substrate. The active-site Proton acceptor is histidine 235. The active site involves glutamate 237. A substrate-binding site is contributed by arginine 249.

Belongs to the MetA family.

The protein resides in the cytoplasm. It catalyses the reaction L-homoserine + acetyl-CoA = O-acetyl-L-homoserine + CoA. The protein operates within amino-acid biosynthesis; L-methionine biosynthesis via de novo pathway; O-acetyl-L-homoserine from L-homoserine: step 1/1. Transfers an acetyl group from acetyl-CoA to L-homoserine, forming acetyl-L-homoserine. The sequence is that of Homoserine O-acetyltransferase from Methanomethylophilus alvi (strain Mx1201).